Reading from the N-terminus, the 597-residue chain is Phosphoinositide phosphatase SAC7 (597 aa).

The region spanning 130–458 (LSVAEKTTGL…GDEISIQYSG (329 aa)) is the SAC domain. The short motif at 393 to 404 (RSNCIDCLDRTN) is the Phosphatase catalytic core element. 2 consecutive transmembrane segments (helical) span residues 528-548 (AVAN…FATM) and 559-579 (HKHL…AALV).

As to expression, ubiquitous.

It localises to the endoplasmic reticulum membrane. Its subcellular location is the cytoplasmic vesicle membrane. Functionally, phosphoinositide phosphatase that preferentially hydrolyzes PtdIns(4)P. Regulates the accumulation of PtdIns(4)P on membrane compartments at the tips of growing root hairs leading to proper root hair development. This Arabidopsis thaliana (Mouse-ear cress) protein is Phosphoinositide phosphatase SAC7 (SAC7).